Consider the following 391-residue polypeptide: Processive diacylglycerol beta-glucosyltransferase (391 aa).

It belongs to the glycosyltransferase 28 family. UgtP subfamily.

It is found in the cell membrane. The enzyme catalyses a 1,2-diacyl-3-O-(beta-D-glucopyranosyl)-sn-glycerol + UDP-alpha-D-glucose = a 1,2-diacyl-3-O-(beta-D-Glc-(1-&gt;6)-beta-D-Glc)-sn-glycerol + UDP + H(+). The catalysed reaction is a 1,2-diacyl-sn-glycerol + UDP-alpha-D-glucose = a 1,2-diacyl-3-O-(beta-D-glucopyranosyl)-sn-glycerol + UDP + H(+). Its pathway is glycolipid metabolism; diglucosyl-diacylglycerol biosynthesis. Functionally, processive glucosyltransferase involved in the biosynthesis of both the bilayer- and non-bilayer-forming membrane glucolipids. Is able to successively transfer two glucosyl residues to diacylglycerol (DAG), thereby catalyzing the formation of beta-monoglucosyl-DAG (3-O-(beta-D-glucopyranosyl)-1,2-diacyl-sn-glycerol) and beta-diglucosyl-DAG (3-O-(beta-D-glucopyranosyl-beta-(1-&gt;6)-D-glucopyranosyl)-1,2-diacyl-sn-glycerol). Beta-diglucosyl-DAG is the predominant glycolipid found in Bacillales and is also used as a membrane anchor for lipoteichoic acid (LTA). The protein is Processive diacylglycerol beta-glucosyltransferase of Staphylococcus aureus (strain MW2).